A 310-amino-acid chain; its full sequence is Zinc finger protein 42 homolog (310 aa).

A compositionally biased stretch (basic residues) spans 1 to 15; the sequence is MSQQLKKRAKTRHQK. A disordered region spans residues 1-35; the sequence is MSQQLKKRAKTRHQKGLGGRAPSGAKPRQGKSSQD. 4 consecutive C2H2-type zinc fingers follow at residues 188-212, 217-239, 245-269, and 275-299; these read IACP…LLIH, HVCA…FLVH, FRCT…VRIH, and FVCP…ILTH. Residues Lys231 and Lys233 each participate in a glycyl lysine isopeptide (Lys-Gly) (interchain with G-Cter in ubiquitin) cross-link.

Belongs to the krueppel C2H2-type zinc-finger protein family. Polyubiquitinated by RNF12, leading to proteasomal degradation. In terms of tissue distribution, expressed in kidney, epidermal keratinocytes, prostate epithelial cells, bronchial and small airway lung epithelial cells (at protein level). Expressed in malignant kidney and several carcinoma cell lines (at protein level). Expressed in embryonic stem cells, kidney, epidermal keratinocytes, prostate epithelial cells, bronchial and small airway lung epithelial cells. Expressed in embryonal carcinomas, seminomas, malignant kidney and several carcinoma cell lines.

The protein resides in the nucleus. Its function is as follows. Involved in the reprogramming of X-chromosome inactivation during the acquisition of pluripotency. Required for efficient elongation of TSIX, a non-coding RNA antisense to XIST. Binds DXPas34 enhancer within the TSIX promoter. Involved in ES cell self-renewal. This is Zinc finger protein 42 homolog (ZFP42) from Homo sapiens (Human).